Reading from the N-terminus, the 376-residue chain is TATA box-binding protein-like 2 (376 aa).

Residues 103-184 are disordered; it reads PDEVTQENKD…SDSLSLASIT (82 aa). The span at 108-122 shows a compositional bias: basic and acidic residues; it reads QENKDQPVISKHETE. A compositionally biased stretch (low complexity) spans 126–159; sequence ESQSPQSRLPSPSEQDVGLGLNSSSLSNSHSQLH. The segment covering 175 to 184 has biased composition (polar residues); that stretch reads SDSLSLASIT.

The protein belongs to the TBP family. Interacts with TAF3.

It is found in the cytoplasm. Its subcellular location is the nucleus. In terms of biological role, transcription factor required in complex with TAF3 for the differentiation of myoblasts into myocytes. The complex replaces TFIID at specific promoters at an early stage in the differentiation process. The protein is TATA box-binding protein-like 2 of Pan troglodytes (Chimpanzee).